The sequence spans 230 residues: Protein LURP-one-related 11 (230 aa).

This sequence belongs to the LOR family.

In terms of biological role, might be related to the phospholipid scramblase and tubby-like superfamily of membrane tethered transcription factors. This is Protein LURP-one-related 11 from Arabidopsis thaliana (Mouse-ear cress).